Reading from the N-terminus, the 380-residue chain is Probable polyglutamine synthesis accessory protein MT0602 (380 aa).

It belongs to the CapA family.

Its function is as follows. Could be involved in the biosynthesis, transport or localization of poly-alpha-L-glutamine (PLG), a cell wall component. Contributes to stress tolerance and virulence. In Mycobacterium tuberculosis (strain CDC 1551 / Oshkosh), this protein is Probable polyglutamine synthesis accessory protein MT0602.